Here is a 239-residue protein sequence, read N- to C-terminus: MYESIIPFPDETASTVDKYCCSHSTSLPPLFADHAAWTVDKFQTSYMMCCPLQAQMCVFLASDRRARRVLEIGTFTGYSALAWKEGMKAVGGEVWTCEAGPRAIAASKEAFAKYDPEGKIHLVEGPALQTLREINAGPFDIIYVDARKAEYIEYVEIILERHLLAENGIILADDTIHLGLVADRSSTNPHSAREDIEYSLQHADNVYKFNEWAVKHPQLDVLLLPIFNGVTLIKIKSQT.

Residues glutamate 71, 73 to 74 (GT), serine 79, glutamate 98, and alanine 127 contribute to the S-adenosyl-L-methionine site.

This sequence belongs to the class I-like SAM-binding methyltransferase superfamily. Cation-dependent O-methyltransferase family.

It catalyses the reaction NK13650 B + S-adenosyl-L-methionine = NK13650 D + S-adenosyl-L-homocysteine + H(+). Its pathway is secondary metabolite biosynthesis. In terms of biological role, O-methyltransferase; part of the ank cluster that mediates the biosynthesis of NK13650 C, a highly modified cyclo-arginine-tyrosine dipeptide. AnkF converts NK13650 B to produce NK13650 D via methylation of the C-17 phenol group. Within the pathway, the cyclodipeptide synthase ankA acts as the scaffold-generating enzyme and is responsible for formation of the cyclo-Arg-Tyr diketopiperazine (cRY) from L-Arg and L-Tyr. The ankA product cRY is desaturated by the cytochrome P450 monooxygenase ankB to yield a dehydro-cyclodipeptide intermediate. The FAD-dependent monooxygenase ankC then installs the m-OH, ankD catalyzes the attachment of L-homoserine, and ankE ligates citrate to the ankD product to yield NK13650 B. The O-methyltransferase ankF is responsible for methylation of the C-17 phenol group of NK13650 B to produce NK13650 D. Amidation of NK13650 D with L-Asp by ankG then leads to the production of NK13650 C, whereas amidation of NK13650 B produces NK13650 A. The protein is O-methyltransferase ankF of Aspergillus thermomutatus (Neosartorya pseudofischeri).